Here is a 366-residue protein sequence, read N- to C-terminus: Phospho-N-acetylmuramoyl-pentapeptide-transferase (366 aa).

Helical transmembrane passes span 27–47, 71–91, 93–113, 134–154, 174–194, 205–225, 245–265, 268–288, 294–314, and 343–363; these read AALFTSALIVFLFGPTIINSL, TPTMGGLMILAGIVGASLLWA, LSNVYVVATLLVTLGFGAIGF, LGIEFVIAGIAVYFMMRTALA, FLINLGIMFVVFGGFVIVGAG, GLAIVPVMIAAASFGVIAYLA, LAVVLGAVIGAGLGFLWFNAP, AIFMGDTGSLALGGTIGTVAV, IVMAIIGGLFVMETLSVIIQV, and QVVIRFWIIAVGLALLGLSTL.

The protein belongs to the glycosyltransferase 4 family. MraY subfamily. Requires Mg(2+) as cofactor.

It is found in the cell inner membrane. It carries out the reaction UDP-N-acetyl-alpha-D-muramoyl-L-alanyl-gamma-D-glutamyl-meso-2,6-diaminopimeloyl-D-alanyl-D-alanine + di-trans,octa-cis-undecaprenyl phosphate = di-trans,octa-cis-undecaprenyl diphospho-N-acetyl-alpha-D-muramoyl-L-alanyl-D-glutamyl-meso-2,6-diaminopimeloyl-D-alanyl-D-alanine + UMP. It participates in cell wall biogenesis; peptidoglycan biosynthesis. Its function is as follows. Catalyzes the initial step of the lipid cycle reactions in the biosynthesis of the cell wall peptidoglycan: transfers peptidoglycan precursor phospho-MurNAc-pentapeptide from UDP-MurNAc-pentapeptide onto the lipid carrier undecaprenyl phosphate, yielding undecaprenyl-pyrophosphoryl-MurNAc-pentapeptide, known as lipid I. This Rhizobium etli (strain ATCC 51251 / DSM 11541 / JCM 21823 / NBRC 15573 / CFN 42) protein is Phospho-N-acetylmuramoyl-pentapeptide-transferase.